Reading from the N-terminus, the 385-residue chain is Leucine aminopeptidase 1 (385 aa).

The signal sequence occupies residues 1–19 (MKFPSFLSLGIAASTTALA). Positions 20-87 (ALPDQKPIGD…FPRAFAKTAV (68 aa)) are excised as a propeptide. Residue asparagine 177 is glycosylated (N-linked (GlcNAc...) asparagine). 2 residues coordinate Zn(2+): histidine 185 and aspartate 204. N-linked (GlcNAc...) asparagine glycosylation is present at asparagine 229. Zn(2+) is bound by residues glutamate 243 and aspartate 270. Cysteine 319 and cysteine 323 form a disulfide bridge. Residue histidine 352 participates in Zn(2+) binding.

It belongs to the peptidase M28 family. M28E subfamily. As to quaternary structure, monomer. Zn(2+) is required as a cofactor.

Its subcellular location is the secreted. In terms of biological role, extracellular aminopeptidase that allows assimilation of proteinaceous substrates. The sequence is that of Leucine aminopeptidase 1 (LAP1) from Blastomyces gilchristii (strain SLH14081) (Blastomyces dermatitidis).